A 288-amino-acid polypeptide reads, in one-letter code: Glucose uptake protein GlcU (288 aa).

Helical transmembrane passes span 4-26 (LIAL…VGGG), 33-51 (GTTF…TGNA), 56-75 (LTII…GQGY), 82-104 (LIGV…TLFS), 114-136 (GVQV…LTSI), 148-170 (NFGK…VVVA), 180-197 (ALFF…ILSA), 206-225 (TLWN…FMFY), 230-252 (VGVA…GGIF), and 264-283 (IGIW…SEIL).

It belongs to the GRP transporter (TC 2.A.7.5) family.

The protein localises to the cell membrane. In terms of biological role, involved in the uptake of glucose. This Staphylococcus xylosus protein is Glucose uptake protein GlcU (glcU).